We begin with the raw amino-acid sequence, 245 residues long: Collagen triple helix repeat-containing protein 1 (245 aa).

Positions 1–32 are cleaved as a signal peptide; sequence MHPQGRAAPPQLLLGLFLVLLLLLQLSAPISA. Positions 59–92 constitute a Collagen-like domain; the sequence is QGPAGVPGRDGSPGANGIPGTPGIPGRDGFKGEK. Residues 64-87 form a disordered region; sequence VPGRDGSPGANGIPGTPGIPGRDG. An N-linked (GlcNAc...) asparagine glycan is attached at Asn188.

Post-translationally, N-glycosylated.

Its subcellular location is the secreted. It localises to the extracellular space. The protein localises to the extracellular matrix. Its function is as follows. May act as a negative regulator of collagen matrix deposition. The chain is Collagen triple helix repeat-containing protein 1 (Cthrc1) from Mus musculus (Mouse).